A 287-amino-acid chain; its full sequence is Small ribosomal subunit biogenesis GTPase RsgA (287 aa).

A CP-type G domain is found at 61–218; it reads SSELIRPTVA…LVDTPGFTTL (158 aa). GTP-binding positions include 110–113 and 161–169; these read NKED and GPSGAGKST. Positions 242, 247, 249, and 255 each coordinate Zn(2+).

The protein belongs to the TRAFAC class YlqF/YawG GTPase family. RsgA subfamily. As to quaternary structure, monomer. Associates with 30S ribosomal subunit, binds 16S rRNA. The cofactor is Zn(2+).

It is found in the cytoplasm. In terms of biological role, one of several proteins that assist in the late maturation steps of the functional core of the 30S ribosomal subunit. Helps release RbfA from mature subunits. May play a role in the assembly of ribosomal proteins into the subunit. Circularly permuted GTPase that catalyzes slow GTP hydrolysis, GTPase activity is stimulated by the 30S ribosomal subunit. In Clostridium perfringens (strain ATCC 13124 / DSM 756 / JCM 1290 / NCIMB 6125 / NCTC 8237 / Type A), this protein is Small ribosomal subunit biogenesis GTPase RsgA.